A 2511-amino-acid polypeptide reads, in one-letter code: Fatty acid synthase (2511 aa).

At Met-1 the chain carries N-acetylmethionine. Residues 1 to 406 enclose the Ketosynthase family 3 (KS3) domain; the sequence is MEEVVIAGMS…GSNVHIILRP (406 aa). A Phosphoserine modification is found at Ser-63. Position 70 is an N6-acetyllysine (Lys-70). Cys-161 serves as the catalytic For beta-ketoacyl synthase activity. Residue Ser-207 is modified to Phosphoserine. Catalysis depends on His-293, which acts as the For beta-ketoacyl synthase activity. At Lys-298 the chain carries N6-acetyllysine. His-331 (for beta-ketoacyl synthase activity) is an active-site residue. Residues 429-817 are acyl and malonyl transferases; it reads RTPEAVQKLL…IDANPNALFP (389 aa). Residues Lys-436 and Lys-528 each carry the N6-acetyllysine modification. The active-site For malonyltransferase activity is Ser-581. An acyl-CoA contacts are provided by residues 647–648 and Phe-671; that span reads DT. Position 673 is an N6-acetyllysine (Lys-673). Ser-725 is modified (phosphoserine). An acyl-CoA is bound at residue Arg-773. The tract at residues 838-966 is N-terminal hotdog fold; sequence HSLAWDVPAA…KVYQWDDPDP (129 aa). The PKS/mFAS DH domain maps to 838 to 1108; sequence HSLAWDVPAA…TESAPRRQQE (271 aa). The Proton acceptor; for dehydratase activity role is filled by His-878. The interval 981–1108 is C-terminal hotdog fold; that stretch reads EPLFLAQAEV…TESAPRRQQE (128 aa). Lys-992 is subject to N6-acetyllysine. Residue Asp-1031 is the Proton donor; for dehydratase activity of the active site. A phosphoserine mark is found at Ser-1174 and Ser-1411. Residue Cys-1471 is modified to S-nitrosocysteine. Residues Ser-1584 and Ser-1594 each carry the phosphoserine modification. Residues 1635–1863 are enoyl reductase; sequence DVPSNWTLEE…VQVLAEEPEA (229 aa). Residue 1671-1688 participates in NADP(+) binding; that stretch reads LLIHSGSGGVGQAAIAIA. The residue at position 1704 (Lys-1704) is an N6-(pyridoxal phosphate)lysine; alternate. Lys-1704 is subject to N6-acetyllysine; alternate. N6-acetyllysine occurs at positions 1771 and 1847. Residues 1864-2118 are beta-ketoacyl reductase; sequence VLKGAKPKLM…FVLAEKAAAY (255 aa). 1886-1901 serves as a coordination point for NADP(+); it reads SYIIAGGLGGFGLELA. Residue Lys-1995 is modified to N6-acetyllysine. At Cys-2091 the chain carries S-nitrosocysteine. A Carrier domain is found at 2121–2198; the sequence is RDSQRDLVEA…ELSSKADEAS (78 aa). At Ser-2156 the chain carries O-(pantetheine 4'-phosphoryl)serine; alternate. Residue Ser-2156 is modified to Phosphoserine; alternate. A Phosphoserine modification is found at Ser-2198. Phosphothreonine is present on residues Thr-2204 and Thr-2215. A thioesterase region spans residues 2207–2511; the sequence is EDGLAQQQTQ…AEPRVSVREG (305 aa). Position 2236 is a phosphoserine (Ser-2236). Ser-2308 (for thioesterase activity) is an active-site residue. Lys-2391 bears the N6-acetyllysine mark. Residue Lys-2449 forms a Glycyl lysine isopeptide (Lys-Gly) (interchain with G-Cter in SUMO2) linkage. His-2481 acts as the For thioesterase activity in catalysis.

In terms of assembly, homodimer which is arranged in a head to tail fashion. Interacts with CEACAM1; this interaction is insulin and phosphorylation-dependent; reduces fatty-acid synthase activity. S-nitrosylation of Fatty acid synthase at cysteine residues Cys-1471 or Cys-2091 is important for the enzyme dimerization. In adipocytes, S-nitrosylation of Fatty acid synthase occurs under physiological conditions and gradually increases during adipogenesis. As to expression, ubiquitous. Prominent expression in brain, lung, liver and mammary gland.

Its subcellular location is the cytoplasm. The protein localises to the melanosome. The catalysed reaction is acetyl-CoA + n malonyl-CoA + 2n NADPH + 2n H(+) = a long-chain fatty acid + (n+1) CoA + n CO2 + 2n NADP(+).. It carries out the reaction holo-[ACP] + acetyl-CoA = acetyl-[ACP] + CoA. It catalyses the reaction holo-[ACP] + malonyl-CoA = malonyl-[ACP] + CoA. The enzyme catalyses a fatty acyl-[ACP] + malonyl-[ACP] + H(+) = a 3-oxoacyl-[ACP] + holo-[ACP] + CO2. The catalysed reaction is a (3R)-hydroxyacyl-[ACP] + NADP(+) = a 3-oxoacyl-[ACP] + NADPH + H(+). It carries out the reaction a (3R)-hydroxyacyl-[ACP] = a (2E)-enoyl-[ACP] + H2O. It catalyses the reaction a 2,3-saturated acyl-[ACP] + NADP(+) = a (2E)-enoyl-[ACP] + NADPH + H(+). The enzyme catalyses hexadecanoyl-[ACP] + H2O = hexadecanoate + holo-[ACP] + H(+). The catalysed reaction is acetyl-[ACP] + malonyl-[ACP] + H(+) = 3-oxobutanoyl-[ACP] + holo-[ACP] + CO2. It carries out the reaction 3-oxobutanoyl-[ACP] + NADPH + H(+) = (3R)-hydroxybutanoyl-[ACP] + NADP(+). It catalyses the reaction (3R)-hydroxybutanoyl-[ACP] = (2E)-butenoyl-[ACP] + H2O. The enzyme catalyses (2E)-butenoyl-[ACP] + NADPH + H(+) = butanoyl-[ACP] + NADP(+). The catalysed reaction is butanoyl-[ACP] + malonyl-[ACP] + H(+) = 3-oxohexanoyl-[ACP] + holo-[ACP] + CO2. It carries out the reaction 3-oxohexanoyl-[ACP] + NADPH + H(+) = (3R)-hydroxyhexanoyl-[ACP] + NADP(+). It catalyses the reaction (3R)-hydroxyhexanoyl-[ACP] = (2E)-hexenoyl-[ACP] + H2O. The enzyme catalyses (2E)-hexenoyl-[ACP] + NADPH + H(+) = hexanoyl-[ACP] + NADP(+). The catalysed reaction is hexanoyl-[ACP] + malonyl-[ACP] + H(+) = 3-oxooctanoyl-[ACP] + holo-[ACP] + CO2. It carries out the reaction 3-oxooctanoyl-[ACP] + NADPH + H(+) = (3R)-hydroxyoctanoyl-[ACP] + NADP(+). It catalyses the reaction (3R)-hydroxyoctanoyl-[ACP] = (2E)-octenoyl-[ACP] + H2O. The enzyme catalyses (2E)-octenoyl-[ACP] + NADPH + H(+) = octanoyl-[ACP] + NADP(+). The catalysed reaction is octanoyl-[ACP] + malonyl-[ACP] + H(+) = 3-oxodecanoyl-[ACP] + holo-[ACP] + CO2. It carries out the reaction 3-oxodecanoyl-[ACP] + NADPH + H(+) = (3R)-hydroxydecanoyl-[ACP] + NADP(+). It catalyses the reaction (3R)-hydroxydecanoyl-[ACP] = (2E)-decenoyl-[ACP] + H2O. The enzyme catalyses (2E)-decenoyl-[ACP] + NADPH + H(+) = decanoyl-[ACP] + NADP(+). The catalysed reaction is decanoyl-[ACP] + malonyl-[ACP] + H(+) = 3-oxododecanoyl-[ACP] + holo-[ACP] + CO2. It carries out the reaction 3-oxododecanoyl-[ACP] + NADPH + H(+) = (3R)-hydroxydodecanoyl-[ACP] + NADP(+). It catalyses the reaction (3R)-hydroxydodecanoyl-[ACP] = (2E)-dodecenoyl-[ACP] + H2O. The enzyme catalyses (2E)-dodecenoyl-[ACP] + NADPH + H(+) = dodecanoyl-[ACP] + NADP(+). The catalysed reaction is dodecanoyl-[ACP] + malonyl-[ACP] + H(+) = 3-oxotetradecanoyl-[ACP] + holo-[ACP] + CO2. It carries out the reaction 3-oxotetradecanoyl-[ACP] + NADPH + H(+) = (3R)-hydroxytetradecanoyl-[ACP] + NADP(+). It catalyses the reaction (3R)-hydroxytetradecanoyl-[ACP] = (2E)-tetradecenoyl-[ACP] + H2O. The enzyme catalyses (2E)-tetradecenoyl-[ACP] + NADPH + H(+) = tetradecanoyl-[ACP] + NADP(+). The catalysed reaction is tetradecanoyl-[ACP] + malonyl-[ACP] + H(+) = 3-oxohexadecanoyl-[ACP] + holo-[ACP] + CO2. It carries out the reaction 3-oxohexadecanoyl-[ACP] + NADPH + H(+) = (3R)-hydroxyhexadecanoyl-[ACP] + NADP(+). It catalyses the reaction (3R)-hydroxyhexadecanoyl-[ACP] = (2E)-hexadecenoyl-[ACP] + H2O. The enzyme catalyses (2E)-hexadecenoyl-[ACP] + NADPH + H(+) = hexadecanoyl-[ACP] + NADP(+). The catalysed reaction is hexadecanoyl-[ACP] + malonyl-[ACP] + H(+) = 3-oxooctadecanoyl-[ACP] + holo-[ACP] + CO2. It carries out the reaction 3-oxooctadecanoyl-[ACP] + NADPH + H(+) = (3R)-hydroxyoctadecanoyl-[ACP] + NADP(+). It catalyses the reaction (3R)-hydroxyoctadecanoyl-[ACP] = (2E)-octadecenoyl-[ACP] + H2O. The enzyme catalyses (2E)-octadecenoyl-[ACP] + NADPH + H(+) = octadecanoyl-[ACP] + NADP(+). The catalysed reaction is tetradecanoyl-[ACP] + H2O = tetradecanoate + holo-[ACP] + H(+). It carries out the reaction octadecanoyl-[ACP] + H2O = octadecanoate + holo-[ACP] + H(+). Its pathway is lipid metabolism; fatty acid biosynthesis. With respect to regulation, activated by S-nitrosylation which promotes enzyme dimerization. Cerulenin, a potent non-competitive pharmacological inhibitor of FAS, binds covalently to the active site of the condensing enzyme region, inactivating a key enzyme step in fatty acid synthesis. Functionally, fatty acid synthetase is a multifunctional enzyme that catalyzes the de novo biosynthesis of long-chain saturated fatty acids starting from acetyl-CoA and malonyl-CoA in the presence of NADPH. This multifunctional protein contains 7 catalytic activities and a site for the binding of the prosthetic group 4'-phosphopantetheine of the acyl carrier protein ([ACP]) domain. In terms of biological role, (Microbial infection) Fatty acid synthetase activity is required for SARS coronavirus-2/SARS-CoV-2 replication. This is Fatty acid synthase (FASN) from Homo sapiens (Human).